A 208-amino-acid polypeptide reads, in one-letter code: MELKVLNTAGTETGEVVILRDDIFGIEISEHAMYLDVKSILANKRQGTHKAKTRSEVRGGGKKPFRQKGTGNARQGSSRSPIHVGGGTIFGPQPHTYEQKVNKKVKLLARRSALSAKAQAGKIVVVDDFRFDAIKTKPFADILKNLGLDAKKTLLLMPEYDMVVNRSGRNIAKLEIMTADKASTYDILYSNTLLVQKSALKTIDETLG.

The segment at 45-95 is disordered; sequence RQGTHKAKTRSEVRGGGKKPFRQKGTGNARQGSSRSPIHVGGGTIFGPQPH. The span at 69 to 80 shows a compositional bias: polar residues; sequence GTGNARQGSSRS.

This sequence belongs to the universal ribosomal protein uL4 family. Part of the 50S ribosomal subunit.

Functionally, one of the primary rRNA binding proteins, this protein initially binds near the 5'-end of the 23S rRNA. It is important during the early stages of 50S assembly. It makes multiple contacts with different domains of the 23S rRNA in the assembled 50S subunit and ribosome. Its function is as follows. Forms part of the polypeptide exit tunnel. The protein is Large ribosomal subunit protein uL4 of Chlorobium chlorochromatii (strain CaD3).